The chain runs to 82 residues: DNA gyrase inhibitor YacG (82 aa).

Zn(2+)-binding residues include C9, C12, C27, and C31. The tract at residues 44–82 is disordered; that stretch reads IGLPHEGDPGDAPVEYLDDRDLTQPSPERQNESFHRYSE. Residues 72 to 82 show a composition bias toward basic and acidic residues; sequence RQNESFHRYSE.

The protein belongs to the DNA gyrase inhibitor YacG family. Interacts with GyrB. The cofactor is Zn(2+).

In terms of biological role, inhibits all the catalytic activities of DNA gyrase by preventing its interaction with DNA. Acts by binding directly to the C-terminal domain of GyrB, which probably disrupts DNA binding by the gyrase. This is DNA gyrase inhibitor YacG from Rhodopirellula baltica (strain DSM 10527 / NCIMB 13988 / SH1).